We begin with the raw amino-acid sequence, 361 residues long: Phospho-N-acetylmuramoyl-pentapeptide-transferase (361 aa).

A run of 10 helical transmembrane segments spans residues 25–45 (RAVL…PWVI), 73–93 (TMGG…WADL), 97–117 (YVWL…YDDW), 134–154 (MFWQ…TASL), 168–188 (VIYP…IVGT), 200–220 (GLAA…AYVA), 240–260 (VAVF…FNAY), 264–284 (VFMG…VAVI), 289–309 (IVLF…MIQV), and 338–358 (QVVV…LSTL).

This sequence belongs to the glycosyltransferase 4 family. MraY subfamily. The cofactor is Mg(2+).

Its subcellular location is the cell inner membrane. It catalyses the reaction UDP-N-acetyl-alpha-D-muramoyl-L-alanyl-gamma-D-glutamyl-meso-2,6-diaminopimeloyl-D-alanyl-D-alanine + di-trans,octa-cis-undecaprenyl phosphate = di-trans,octa-cis-undecaprenyl diphospho-N-acetyl-alpha-D-muramoyl-L-alanyl-D-glutamyl-meso-2,6-diaminopimeloyl-D-alanyl-D-alanine + UMP. It functions in the pathway cell wall biogenesis; peptidoglycan biosynthesis. Its function is as follows. Catalyzes the initial step of the lipid cycle reactions in the biosynthesis of the cell wall peptidoglycan: transfers peptidoglycan precursor phospho-MurNAc-pentapeptide from UDP-MurNAc-pentapeptide onto the lipid carrier undecaprenyl phosphate, yielding undecaprenyl-pyrophosphoryl-MurNAc-pentapeptide, known as lipid I. The polypeptide is Phospho-N-acetylmuramoyl-pentapeptide-transferase (Laribacter hongkongensis (strain HLHK9)).